The sequence spans 490 residues: 3-octaprenyl-4-hydroxybenzoate carboxy-lyase (490 aa).

Residue Asn172 coordinates Mn(2+). Prenylated FMN is bound by residues 175-177 (IYR), 189-191 (RWL), and 194-195 (RG). Glu238 contacts Mn(2+). The active-site Proton donor is Asp287.

This sequence belongs to the UbiD family. Homohexamer. Prenylated FMN is required as a cofactor. Mn(2+) serves as cofactor.

Its subcellular location is the cell membrane. It carries out the reaction a 4-hydroxy-3-(all-trans-polyprenyl)benzoate + H(+) = a 2-(all-trans-polyprenyl)phenol + CO2. It participates in cofactor biosynthesis; ubiquinone biosynthesis. Functionally, catalyzes the decarboxylation of 3-octaprenyl-4-hydroxy benzoate to 2-octaprenylphenol, an intermediate step in ubiquinone biosynthesis. The polypeptide is 3-octaprenyl-4-hydroxybenzoate carboxy-lyase (Saccharophagus degradans (strain 2-40 / ATCC 43961 / DSM 17024)).